The sequence spans 430 residues: Adenylosuccinate synthetase (430 aa).

Residues 12 to 18 (GDEGKGK) and 40 to 42 (GHT) each bind GTP. The active-site Proton acceptor is D13. Mg(2+) contacts are provided by D13 and G40. IMP contacts are provided by residues 13-16 (DEGK), 38-41 (NAGH), T130, R144, Q224, T239, and R303. The active-site Proton donor is H41. Residue 299-305 (TVTGRKR) participates in substrate binding. Residues R305, 331–333 (KLD), and 413–415 (STS) contribute to the GTP site.

This sequence belongs to the adenylosuccinate synthetase family. In terms of assembly, homodimer. Mg(2+) serves as cofactor.

The protein localises to the cytoplasm. The enzyme catalyses IMP + L-aspartate + GTP = N(6)-(1,2-dicarboxyethyl)-AMP + GDP + phosphate + 2 H(+). The protein operates within purine metabolism; AMP biosynthesis via de novo pathway; AMP from IMP: step 1/2. In terms of biological role, plays an important role in the de novo pathway of purine nucleotide biosynthesis. Catalyzes the first committed step in the biosynthesis of AMP from IMP. This chain is Adenylosuccinate synthetase, found in Paracoccus denitrificans (strain Pd 1222).